Here is a 445-residue protein sequence, read N- to C-terminus: Phosphoglucosamine mutase (445 aa).

Catalysis depends on Ser-104, which acts as the Phosphoserine intermediate. Mg(2+) contacts are provided by Ser-104, Asp-243, Asp-245, and Asp-247. Ser-104 is modified (phosphoserine).

This sequence belongs to the phosphohexose mutase family. Mg(2+) is required as a cofactor. Post-translationally, activated by phosphorylation.

It carries out the reaction alpha-D-glucosamine 1-phosphate = D-glucosamine 6-phosphate. Functionally, catalyzes the conversion of glucosamine-6-phosphate to glucosamine-1-phosphate. The polypeptide is Phosphoglucosamine mutase (Neisseria subflava).